A 393-amino-acid polypeptide reads, in one-letter code: Putative N(4)-(beta-N-acetylglucosaminyl)-L-asparaginase CG1827 (393 aa).

A signal peptide spans 1-23 (MRRHLRASLWILCLATMAFSILA). N-linked (GlcNAc...) asparagine glycans are attached at residues Asn-49 and Asn-64. Cystine bridges form between Cys-97–Cys-102 and Cys-196–Cys-212. Thr-243 acts as the Nucleophile in catalysis. Substrate-binding positions include 271 to 274 (RVGD) and 294 to 297 (TGDG). Cys-354 and Cys-381 form a disulfide bridge.

Belongs to the Ntn-hydrolase family. In terms of assembly, heterotetramer of two alpha and two beta chains arranged as a dimer of alpha/beta heterodimers. In terms of processing, cleaved into an alpha and beta chain by autocatalysis; this activates the enzyme. The N-terminal residue of the beta subunit is responsible for the nucleophile hydrolase activity.

The catalysed reaction is N(4)-(beta-N-acetyl-D-glucosaminyl)-L-asparagine + H2O = N-acetyl-beta-D-glucosaminylamine + L-aspartate + H(+). Cleaves the GlcNAc-Asn bond which joins oligosaccharides to the peptide of asparagine-linked glycoproteins. The chain is Putative N(4)-(beta-N-acetylglucosaminyl)-L-asparaginase CG1827 from Drosophila melanogaster (Fruit fly).